The primary structure comprises 144 residues: MNPARCRILAVGKVRRGWIQDGIDLYLKRLPGLTISELRDSNPDKEADAIRAALRPDETLIALMEQGDTLASVPFAQRLEQFGNQRLAFVIGGADGLTAELKAQAQWRLSLSPMTFPHELARLMLVEQLFRAQAIVQGSPYHRA.

Residues Leu-63, Gly-92, and 111–116 (LSPMTF) each bind S-adenosyl-L-methionine.

This sequence belongs to the RNA methyltransferase RlmH family. As to quaternary structure, homodimer.

It localises to the cytoplasm. The enzyme catalyses pseudouridine(1915) in 23S rRNA + S-adenosyl-L-methionine = N(3)-methylpseudouridine(1915) in 23S rRNA + S-adenosyl-L-homocysteine + H(+). Functionally, specifically methylates the pseudouridine at position 1915 (m3Psi1915) in 23S rRNA. The sequence is that of Ribosomal RNA large subunit methyltransferase H from Synechococcus sp. (strain CC9605).